The chain runs to 834 residues: Probable phosphoenolpyruvate synthase (834 aa).

His447 functions as the Tele-phosphohistidine intermediate in the catalytic mechanism. Residues Arg550, Arg598, Glu699, Gly720, Ser721, Asn722, and Asp723 each coordinate substrate. Glu699 provides a ligand contact to Mg(2+). Asp723 contributes to the Mg(2+) binding site. The Proton donor role is filled by Cys772.

The protein belongs to the PEP-utilizing enzyme family. Homooligomer. Forms a large complex of about 2000 kDa. Mg(2+) serves as cofactor. Post-translationally, the N-terminus is blocked.

It catalyses the reaction pyruvate + ATP + H2O = phosphoenolpyruvate + AMP + phosphate + 2 H(+). The protein operates within carbohydrate biosynthesis; gluconeogenesis. In terms of biological role, catalyzes the phosphorylation of pyruvate to phosphoenolpyruvate. This Staphylothermus marinus (strain ATCC 43588 / DSM 3639 / JCM 9404 / F1) protein is Probable phosphoenolpyruvate synthase (ppsA).